The primary structure comprises 265 residues: Tryptophan synthase alpha chain (265 aa).

Active-site proton acceptor residues include Glu-45 and Asp-56.

Belongs to the TrpA family. In terms of assembly, tetramer of two alpha and two beta chains.

The enzyme catalyses (1S,2R)-1-C-(indol-3-yl)glycerol 3-phosphate + L-serine = D-glyceraldehyde 3-phosphate + L-tryptophan + H2O. The protein operates within amino-acid biosynthesis; L-tryptophan biosynthesis; L-tryptophan from chorismate: step 5/5. The alpha subunit is responsible for the aldol cleavage of indoleglycerol phosphate to indole and glyceraldehyde 3-phosphate. The protein is Tryptophan synthase alpha chain of Halalkalibacterium halodurans (strain ATCC BAA-125 / DSM 18197 / FERM 7344 / JCM 9153 / C-125) (Bacillus halodurans).